A 559-amino-acid polypeptide reads, in one-letter code: MAPRRQRSGSGRRVLNEAKKVDNGNKATEDDSPPGKKMRTCQRKGPMAGGKDADRTKDNRDSVKTLLLKGKAPVDPECAAKLGKAHVYCEGDDVYDVMLNQTNLQFNNNKYYLIQLLEDDAQRNFSVWMRWGRVGKTGQHSLVTCSGDLNKAKEIFQKKFLDKTKNNWEDRENFEKVPGKYDMLQMDYAASTQDESKTKEEETLKPESQLDLRVQELLKLICNVQTMEEMMIEMKYDTKRAPLGKLTVAQIKAGYQSLKKIEDCIRAGQHGRALVEACNEFYTRIPHDFGLSIPPVIRTEKELSDKVKLLEALGDIEIALKLVKSERQGLEHPLDQHYRNLHCALRPLDHESNEFKVISQYLQSTHAPTHKDYTMTLLDVFEVEKEGEKEAFREDLPNRMLLWHGSRLSNWVGILSHGLRVAPPEAPITGYMFGKGIYFADMSSKSANYCFASRLKNTGLLLLSEVALGQCNELLEANPKAQGLLRGKHSTKGMGKMAPSPAHFITLNGSTVPLGPASDTGILNPEGYTLNYNEFIVYSPNQVRMRYLLKIQFNFLQLW.

Positions 1–58 (MAPRRQRSGSGRRVLNEAKKVDNGNKATEDDSPPGKKMRTCQRKGPMAGGKDADRTKD) are disordered. The N-terminal region (NTR) stretch occupies residues 1–83 (MAPRRQRSGS…VDPECAAKLG (83 aa)). Over residues 14-29 (VLNEAKKVDNGNKATE) the composition is skewed to basic and acidic residues. 2 consecutive short sequence motifs (nuclear localization signal) follow at residues 19–20 (KK) and 33–39 (PPGKKMR). An N6-(ADP-ribosyl)lysine; alternate mark is found at Lys36 and Lys37. N6-acetyllysine; alternate occurs at positions 36 and 37. Residues 84–181 (KAHVYCEGDD…ENFEKVPGKY (98 aa)) form the WGR domain. One can recognise a PARP alpha-helical domain in the interval 207-324 (ESQLDLRVQE…DIEIALKLVK (118 aa)). A Phosphoserine modification is found at Ser208. The PARP catalytic domain occupies 332-559 (HPLDQHYRNL…KIQFNFLQLW (228 aa)). Residues 404–406 (HGS), Gly413, Arg420, and Ser446 each bind NAD(+). Glu534 serves as the catalytic For poly [ADP-ribose] polymerase activity.

Belongs to the ARTD/PARP family. In terms of assembly, component of a base excision repair (BER) complex, containing at least XRCC1, PARP1, POLB and LRIG3. Homo- and heterodimer with PARP1. Interacts (via the PARP catalytic domain) with HPF1. Interacts with core nucleosomes. In terms of processing, auto poly-ADP-ribosylated on serine residues, leading to dissociation of the PARP2-HPF1 complex from chromatin. Poly-ADP-ribosylated by PARP1. Acetylation reduces DNA binding and enzymatic activity. Post-translationally, proteolytically cleaved by caspase-8 (CASP8) in response to apoptosis, leading to its inactivation. Widely expressed; the highest levels were in testis followed by ovary. Expression is correlated with proliferation, with higher levels occurring during early fetal development and organogenesis and in the highly proliferative cell compartments of adult.

The protein localises to the nucleus. It localises to the chromosome. The enzyme catalyses NAD(+) + (ADP-D-ribosyl)n-acceptor = nicotinamide + (ADP-D-ribosyl)n+1-acceptor + H(+).. The catalysed reaction is L-seryl-[protein] + NAD(+) = O-(ADP-D-ribosyl)-L-seryl-[protein] + nicotinamide + H(+). It catalyses the reaction L-aspartyl-[protein] + NAD(+) = 4-O-(ADP-D-ribosyl)-L-aspartyl-[protein] + nicotinamide. It carries out the reaction L-glutamyl-[protein] + NAD(+) = 5-O-(ADP-D-ribosyl)-L-glutamyl-[protein] + nicotinamide. ADP-ribosyltransferase activity is regulated via an allosteric activation mechanism. In absence of activation signal, PARP2 is autoinhibited by the PARP alpha-helical domain (also named HD region), which prevents effective NAD(+)-binding. Activity is highly stimulated by signals, which unfold the PARP alpha-helical domain, relieving autoinhibition. Poly-ADP-ribosyltransferase activity is tightly regulated and PARP2 is removed from damaged chromatin following initial poly-ADP-ribosylation of chromatin to avoid prolonged residence (trapping) that has cytotoxic consequences. CHD1L promotes PARP2 removal from chromatin. Its function is as follows. Poly-ADP-ribosyltransferase that mediates poly-ADP-ribosylation of proteins and plays a key role in DNA repair. Mediates glutamate, aspartate or serine ADP-ribosylation of proteins: the ADP-D-ribosyl group of NAD(+) is transferred to the acceptor carboxyl group of target residues and further ADP-ribosyl groups are transferred to the 2'-position of the terminal adenosine moiety, building up a polymer with an average chain length of 20-30 units. Serine ADP-ribosylation of proteins constitutes the primary form of ADP-ribosylation of proteins in response to DNA damage. Mediates glutamate and aspartate ADP-ribosylation of target proteins in absence of HPF1. Following interaction with HPF1, catalyzes serine ADP-ribosylation of target proteins; HPF1 conferring serine specificity by completing the PARP2 active site. PARP2 initiates the repair of double-strand DNA breaks: recognizes and binds DNA breaks within chromatin and recruits HPF1, licensing serine ADP-ribosylation of target proteins, such as histones, thereby promoting decompaction of chromatin and the recruitment of repair factors leading to the reparation of DNA strand breaks. HPF1 initiates serine ADP-ribosylation but restricts the polymerase activity of PARP2 in order to limit the length of poly-ADP-ribose chains. Specifically mediates formation of branched poly-ADP-ribosylation. Branched poly-ADP-ribose chains are specifically recognized by some factors, such as APLF. In addition to proteins, also able to ADP-ribosylate DNA: preferentially acts on 5'-terminal phosphates at DNA strand breaks termini in nicked duplex. This Mus musculus (Mouse) protein is Poly [ADP-ribose] polymerase 2 (Parp2).